Consider the following 324-residue polypeptide: Ribosomal RNA small subunit methyltransferase H (324 aa).

S-adenosyl-L-methionine contacts are provided by residues 40–42 (AGH), Asp60, Leu94, Asp108, and His115. A disordered region spans residues 301–324 (EEMKVNTRSRSAKLRVAERTGEDG). Over residues 315 to 324 (RVAERTGEDG) the composition is skewed to basic and acidic residues.

The protein belongs to the methyltransferase superfamily. RsmH family.

Its subcellular location is the cytoplasm. The enzyme catalyses cytidine(1402) in 16S rRNA + S-adenosyl-L-methionine = N(4)-methylcytidine(1402) in 16S rRNA + S-adenosyl-L-homocysteine + H(+). Specifically methylates the N4 position of cytidine in position 1402 (C1402) of 16S rRNA. The polypeptide is Ribosomal RNA small subunit methyltransferase H (Maridesulfovibrio salexigens (strain ATCC 14822 / DSM 2638 / NCIMB 8403 / VKM B-1763) (Desulfovibrio salexigens)).